The chain runs to 208 residues: Pyridoxal 5'-phosphate synthase subunit PdxT (208 aa).

Residue 46–48 (GES) coordinates L-glutamine. The active-site Nucleophile is cysteine 78. L-glutamine-binding positions include arginine 105 and 156-157 (IR). Residues histidine 192 and glutamate 194 each act as charge relay system in the active site.

This sequence belongs to the glutaminase PdxT/SNO family. As to quaternary structure, in the presence of PdxS, forms a dodecamer of heterodimers. Only shows activity in the heterodimer.

The catalysed reaction is aldehydo-D-ribose 5-phosphate + D-glyceraldehyde 3-phosphate + L-glutamine = pyridoxal 5'-phosphate + L-glutamate + phosphate + 3 H2O + H(+). It carries out the reaction L-glutamine + H2O = L-glutamate + NH4(+). It functions in the pathway cofactor biosynthesis; pyridoxal 5'-phosphate biosynthesis. Catalyzes the hydrolysis of glutamine to glutamate and ammonia as part of the biosynthesis of pyridoxal 5'-phosphate. The resulting ammonia molecule is channeled to the active site of PdxS. In Bifidobacterium adolescentis (strain ATCC 15703 / DSM 20083 / NCTC 11814 / E194a), this protein is Pyridoxal 5'-phosphate synthase subunit PdxT.